The sequence spans 381 residues: Protein COS8 (381 aa).

Residues 1-42 (MKENEVKDEKSVDVLSFKQLEFQKTVLPQDVFRNELTWFCYE) are Extracellular-facing. Residues 43-63 (IYKSLAFRIWMLLWLPLSVWW) form a helical membrane-spanning segment. Over 64-72 (KLSSNWIHP) the chain is Cytoplasmic. The chain crosses the membrane as a helical span at residues 73–93 (LIVSLLVLFLGPFFVLVICGL). Residues 94–237 (SRKRSLSKQL…WILKRIFNLR (144 aa)) lie on the Extracellular side of the membrane. A helical membrane pass occupies residues 238 to 258 (CLPLFLYYFLIVYTSGNADLI). Residues 259-381 (SRFLFPVVMF…QSARNEKPLK (123 aa)) are Cytoplasmic-facing.

It belongs to the DUP/COS family.

It localises to the membrane. This Saccharomyces cerevisiae (strain ATCC 204508 / S288c) (Baker's yeast) protein is Protein COS8 (COS8).